The following is a 312-amino-acid chain: Protein-methionine-sulfoxide reductase catalytic subunit MsrP (312 aa).

The segment at residues 1–42 (MALFRYPRPLPSEITPRDMYLSRRSLIGGAAALGAVSATADA) is a signal peptide (tat-type signal). Mo-molybdopterin-binding positions include N68, 71–72 (YE), C126, S161, N211, R216, and 227–229 (GIK).

The protein belongs to the MsrP family. Heterodimer of a catalytic subunit (MsrP) and a heme-binding subunit (MsrQ). The cofactor is Mo-molybdopterin. Predicted to be exported by the Tat system. The position of the signal peptide cleavage has not been experimentally proven.

It localises to the periplasm. It catalyses the reaction L-methionyl-[protein] + a quinone + H2O = L-methionyl-(S)-S-oxide-[protein] + a quinol. The catalysed reaction is L-methionyl-[protein] + a quinone + H2O = L-methionyl-(R)-S-oxide-[protein] + a quinol. Functionally, part of the MsrPQ system that repairs oxidized periplasmic proteins containing methionine sulfoxide residues (Met-O), using respiratory chain electrons. Thus protects these proteins from oxidative-stress damage caused by reactive species of oxygen and chlorine generated by the host defense mechanisms. MsrPQ is essential for the maintenance of envelope integrity under bleach stress, rescuing a wide series of structurally unrelated periplasmic proteins from methionine oxidation. The catalytic subunit MsrP is non-stereospecific, being able to reduce both (R-) and (S-) diastereoisomers of methionine sulfoxide. The polypeptide is Protein-methionine-sulfoxide reductase catalytic subunit MsrP (Gluconobacter oxydans (strain 621H) (Gluconobacter suboxydans)).